The primary structure comprises 163 residues: T-cell surface glycoprotein CD3 zeta chain (163 aa).

Positions 1–21 are cleaved as a signal peptide; that stretch reads MKWKALFTAAILQAQLPITEA. At 22 to 30 the chain is on the extracellular side; sequence QSFGLLDPK. A helical transmembrane segment spans residues 31–51; it reads LCYLLDGILFIYGVILTALFL. The Cytoplasmic segment spans residues 52–163; it reads RVKFSRSADA…ALHMQALPPR (112 aa). Ser58 is modified (phosphoserine). 3 ITAM domains span residues 61 to 89, 99 to 127, and 130 to 158; these read APAYQQGQNQLYNELNLGRREEYDVLDKR, KPRRKNPQEGLYNELQKDKMAEAYSEIGM, and ERRRGKGHDGLYQGLSTATKDTYDALHMQ. Phosphotyrosine is present on residues Tyr64, Tyr72, Tyr83, Tyr110, Tyr122, Tyr141, and Tyr152. The span at 83–98 shows a compositional bias: basic and acidic residues; that stretch reads YDVLDKRRGRDPEMGG. The tract at residues 83–111 is disordered; it reads YDVLDKRRGRDPEMGGKPRRKNPQEGLYN.

Belongs to the CD3Z/FCER1G family. In terms of assembly, the TCR-CD3 complex is composed of a CD3D/CD3E and a CD3G/CD3E heterodimers that preferentially associate with TCRalpha and TCRbeta, respectively, to form TCRalpha/CD3E/CD3G and TCRbeta/CD3G/CD3E trimers. In turn, the hexamer interacts with CD3Z homodimer to form the TCR-CD3 complex. Alternatively, TCRalpha and TCRbeta can be replaced by TCRgamma and TCRdelta. Interacts with SLA. Interacts with TRAT1. Interacts with DOCK2. Interacts with SLA2. Interacts with SHB. Interacts with ZAP70. Interacts (tyrosine phosphorylated) with SHC1 (via SH2 domain). Interacts with PTPRC. Interacts with CRK; this interaction regulates CD3Z phosphorylation. Interacts (on T cell side) with CD81, ICAM1 and CD9 at immunological synapses between antigen-presenting cells and T cells. Interacts with CD160. Interacts with LY6E. Interacts with LY6E. The signaling subunit of immunoglobulin gamma (IgG) Fc receptor complex. As a homodimer or a heterodimer with FCER1G, associates with the ligand binding subunit FCGR3A (via transmembrane domain); this interaction is a prerequisite for Fc receptor complex expression on the cell surface. Interacts with CD5. Post-translationally, phosphorylated on Tyr residues after T-cell receptor triggering by LCK in association with CD4/CD8.

It localises to the cell membrane. Functionally, part of the TCR-CD3 complex present on T-lymphocyte cell surface that plays an essential role in adaptive immune response. When antigen presenting cells (APCs) activate T-cell receptor (TCR), TCR-mediated signals are transmitted across the cell membrane by the CD3 chains CD3D, CD3E, CD3G and CD3Z. All CD3 chains contain immunoreceptor tyrosine-based activation motifs (ITAMs) in their cytoplasmic domain. Upon TCR engagement, these motifs become phosphorylated by Src family protein tyrosine kinases LCK and FYN, resulting in the activation of downstream signaling pathways. CD3Z ITAMs phosphorylation creates multiple docking sites for the protein kinase ZAP70 leading to ZAP70 phosphorylation and its conversion into a catalytically active enzyme. Plays an important role in intrathymic T-cell differentiation. Additionally, participates in the activity-dependent synapse formation of retinal ganglion cells (RGCs) in both the retina and dorsal lateral geniculate nucleus (dLGN). The polypeptide is T-cell surface glycoprotein CD3 zeta chain (CD247) (Sus scrofa (Pig)).